The primary structure comprises 210 residues: Thymidylate kinase (210 aa).

10–17 is an ATP binding site; it reads GLEGAGKS.

The protein belongs to the thymidylate kinase family.

It catalyses the reaction dTMP + ATP = dTDP + ADP. Phosphorylation of dTMP to form dTDP in both de novo and salvage pathways of dTTP synthesis. This Haemophilus influenzae (strain ATCC 51907 / DSM 11121 / KW20 / Rd) protein is Thymidylate kinase (tmk).